Reading from the N-terminus, the 180-residue chain is Large ribosomal subunit protein uL5 (180 aa).

This sequence belongs to the universal ribosomal protein uL5 family. As to quaternary structure, part of the 50S ribosomal subunit; part of the 5S rRNA/L5/L18/L25 subcomplex. Contacts the 5S rRNA and the P site tRNA. Forms a bridge to the 30S subunit in the 70S ribosome.

In terms of biological role, this is one of the proteins that bind and probably mediate the attachment of the 5S RNA into the large ribosomal subunit, where it forms part of the central protuberance. In the 70S ribosome it contacts protein S13 of the 30S subunit (bridge B1b), connecting the 2 subunits; this bridge is implicated in subunit movement. Contacts the P site tRNA; the 5S rRNA and some of its associated proteins might help stabilize positioning of ribosome-bound tRNAs. In Leuconostoc mesenteroides subsp. mesenteroides (strain ATCC 8293 / DSM 20343 / BCRC 11652 / CCM 1803 / JCM 6124 / NCDO 523 / NBRC 100496 / NCIMB 8023 / NCTC 12954 / NRRL B-1118 / 37Y), this protein is Large ribosomal subunit protein uL5.